We begin with the raw amino-acid sequence, 530 residues long: White collar 2 protein (530 aa).

Repeat copies occupy residues 9–12 (GSSM), 21–24 (GSGM), 25–28 (GSGM), 29–32 (GSGM), 33–36 (GTGM), 37–40 (GTGM), and 41–44 (GTGM). The tract at residues 9–44 (GSSMYGFGAMGMGSGMGSGMGSGMGTGMGTGMGTGM) is 7 X 4 AA repeats of G-[SAT]-G-M. Residues 134–158 (IATPTTTTSGPSGGPSSGGGSTLTE) are disordered. The span at 144–154 (PSGGPSSGGGS) shows a compositional bias: gly residues. A PAS domain is found at 162–232 (RRNWPAKVVE…AELNEAIATG (71 aa)). Positions 315–343 (REEQEEQEESHRTWRMSQEGRSDVTPSDD) are disordered. The segment at 468-493 (CTDCGTLDSPEWRKGPSGPKTLCNAC) adopts a GATA-type zinc-finger fold. The interval 504–530 (KNANNNNNGGGIGGHNDIHTPMGDHMG) is disordered.

As to quaternary structure, heterodimer of wc-1 and wc-2 (Potential). Binds to DNA.

Its subcellular location is the nucleus. In terms of biological role, may function as a transcription factor involved in light regulation. Binds and affects blue light regulation of the al-3 gene. Wc-1 and wc-2 interact via homologous PAS domains, bind to promoters of light regulated genes such as frq, and activate transcription. May bind directly to frq. The chain is White collar 2 protein (wc-2) from Neurospora crassa (strain ATCC 24698 / 74-OR23-1A / CBS 708.71 / DSM 1257 / FGSC 987).